Reading from the N-terminus, the 77-residue chain is Mu-conotoxin BuIIIA (77 aa).

An N-terminal signal peptide occupies residues 1-22 (MMSKLGVLLTICLLLFPLFALP). The propeptide occupies 23 to 51 (QDGDQPADRPAERMQDDISSEQNSLLEKR). The tract at residues 26 to 46 (DQPADRPAERMQDDISSEQNS) is disordered. Over residues 28 to 38 (PADRPAERMQD) the composition is skewed to basic and acidic residues. 3 disulfide bridges follow: Cys56–Cys67, Cys57–Cys73, and Cys63–Cys74. The residue at position 74 (Cys74) is a Cysteine amide.

The protein belongs to the conotoxin M superfamily. Expressed by the venom duct.

It localises to the secreted. In terms of biological role, mu-conotoxins block voltage-gated sodium channels (Nav). This synthetic toxin potently blocks rNav1.2/SCN2A, and rNav1.4/SCN4A. It also moderately blocks rNav1.1/SCN1A, rNav1.3/SCN3A, rNav1.5/SCN5A, and mNav1.6/SCN8A. The inhibition is reversible. In Conus bullatus (Bubble cone), this protein is Mu-conotoxin BuIIIA.